The primary structure comprises 348 residues: MAATADREKALATALQQIEKQHGKGSIMRLGEQETVKIAAIPTGSVALDVALGVGGLPRGRIVEIYGPESSGKTTVALHAIANAQAEGGICAFIDAEHALDPEYARKLGVDTDSLLVSQPDNGEQALEIADTLVRSGALELIVVDSVAALTPKAEIEGEMGDSHVGLQARLMSQALRKMTGALNAAGTTAIFINQLREKIGVMFGSPETTTGGRALKFYSSVRLDVRRVETLKDGSEMVGNRTRVKVAKNKVAPPFKQAEFDILYGQGISREGSLIDMGVDCGIITKSGSWFSYNNEQLGQGKENVRKFLRGNPDVANEIEDKILTHLGLREAEVPEGVDPRTGEVEF.

67-74 contacts ATP; the sequence is GPESSGKT.

The protein belongs to the RecA family.

The protein resides in the cytoplasm. Its function is as follows. Can catalyze the hydrolysis of ATP in the presence of single-stranded DNA, the ATP-dependent uptake of single-stranded DNA by duplex DNA, and the ATP-dependent hybridization of homologous single-stranded DNAs. It interacts with LexA causing its activation and leading to its autocatalytic cleavage. This chain is Protein RecA, found in Cutibacterium acnes (Propionibacterium acnes).